Reading from the N-terminus, the 58-residue chain is uncharacterized protein (58 aa).

The helical transmembrane segment at 12–32 (VMTLLITISILIVLAVLLVTI) threads the bilayer.

It localises to the cell membrane. This is an uncharacterized protein from Bacillus subtilis (strain 168).